Consider the following 369-residue polypeptide: Phospho-N-acetylmuramoyl-pentapeptide-transferase (369 aa).

The next 10 helical transmembrane spans lie at 2-22, 55-75, 86-106, 120-140, 163-183, 196-216, 239-259, 266-286, 291-311, and 348-368; these read IALLIGAGLALLCALVGTPLF, TVVVAAVLLSYGLTHLIMFLM, ALILLFLMVGMGLVGFLDDFI, AKLILQAAVGVIFAVLALNFP, LAFGGTVLGAILFVVWSNLIV, LDGLAAGASVMVFGAYTLMGI, PLDLALLAAIMSAALVGFLWW, IFMGDTGSLAIGGAIAGFAIL, LLLGIIGGLFVLITLSVIIQV, and ILGGLFVAVGLGIFYAEWVVL.

It belongs to the glycosyltransferase 4 family. MraY subfamily. The cofactor is Mg(2+).

It localises to the cell membrane. It catalyses the reaction UDP-N-acetyl-alpha-D-muramoyl-L-alanyl-gamma-D-glutamyl-meso-2,6-diaminopimeloyl-D-alanyl-D-alanine + di-trans,octa-cis-undecaprenyl phosphate = di-trans,octa-cis-undecaprenyl diphospho-N-acetyl-alpha-D-muramoyl-L-alanyl-D-glutamyl-meso-2,6-diaminopimeloyl-D-alanyl-D-alanine + UMP. It participates in cell wall biogenesis; peptidoglycan biosynthesis. Functionally, catalyzes the initial step of the lipid cycle reactions in the biosynthesis of the cell wall peptidoglycan: transfers peptidoglycan precursor phospho-MurNAc-pentapeptide from UDP-MurNAc-pentapeptide onto the lipid carrier undecaprenyl phosphate, yielding undecaprenyl-pyrophosphoryl-MurNAc-pentapeptide, known as lipid I. The protein is Phospho-N-acetylmuramoyl-pentapeptide-transferase of Pseudarthrobacter chlorophenolicus (strain ATCC 700700 / DSM 12829 / CIP 107037 / JCM 12360 / KCTC 9906 / NCIMB 13794 / A6) (Arthrobacter chlorophenolicus).